The sequence spans 92 residues: Small ribosomal subunit protein uS19 (92 aa).

The protein belongs to the universal ribosomal protein uS19 family.

In terms of biological role, protein S19 forms a complex with S13 that binds strongly to the 16S ribosomal RNA. The protein is Small ribosomal subunit protein uS19 of Rhodopseudomonas palustris (strain BisB18).